A 326-amino-acid polypeptide reads, in one-letter code: Probable cell division protein WhiA (326 aa).

The H-T-H motif DNA-binding region spans 275 to 308; it reads SLDELGRLADPVMTKDAIAGRIRRLLAMADKRAL.

Belongs to the WhiA family.

Its function is as follows. Involved in cell division and chromosome segregation. This chain is Probable cell division protein WhiA, found in Pseudarthrobacter chlorophenolicus (strain ATCC 700700 / DSM 12829 / CIP 107037 / JCM 12360 / KCTC 9906 / NCIMB 13794 / A6) (Arthrobacter chlorophenolicus).